We begin with the raw amino-acid sequence, 210 residues long: CLAVATA3/ESR (CLE)-related protein 4A-3 (210 aa).

Positions 1–21 (MAKNAMLCLLILRVVLALAFA) are cleaved as a signal peptide. The segment at 21-83 (ATNKKGDEEP…SNQLPNNNWM (63 aa)) is required for secretion from the host cytoplasm to the host apoplasm. N32 is a glycosylation site (N-linked (GlcNAc...) asparagine). A disordered region spans residues 116-210 (RKTGMHSQRH…APAGPDPIHH (95 aa)). Composition is skewed to basic and acidic residues over residues 125-137 (HHEE…EKRV) and 144-200 (PIHH…EKRG). The stretch at 127-135 (EETTLEQEK) is one A-1 repeat. The 4 X approximate repeat A stretch occupies residues 127-198 (EETTLEQEKR…HEDTTLEQEK (72 aa)). One copy of the CLE-1 repeat lies at 136–147 (RVAGAGPDPIHH). A 4 X approximate repeat CLE region spans residues 136–210 (RVAGAGPDPI…APAGPDPIHH (75 aa)). One copy of the A-2 repeat lies at 148–156 (QDTTLEQEK). The stretch at 157-168 (RAVPAGPDPKHH) is one CLE-2 repeat. One copy of the A-3 repeat lies at 169–177 (EETTLEQEK). The CLE-3 repeat unit spans residues 178–189 (RAVPAGPDPKHH). Residues 190 to 198 (EDTTLEQEK) form an A-4 repeat. The CLE-4 repeat unit spans residues 199–210 (RGAPAGPDPIHH).

The protein belongs to the CLV3/ESR signal peptide family. In terms of tissue distribution, highly expressed exclusively within the dorsal esophageal gland cell during syncytium formation in host plants.

It localises to the secreted. The protein resides in the host cytoplasm. The protein localises to the host extracellular space. Its subcellular location is the extracellular space. It is found in the apoplast. Functionally, mimics host plant CLE extracellular signal peptides that regulate cell fate. May play a role in the differentiation or division of feeding cells (syncytia) induced in plant roots during infection. This is CLAVATA3/ESR (CLE)-related protein 4A-3 (CLE-4A-3) from Globodera rostochiensis (Golden nematode worm).